The primary structure comprises 190 residues: Orotate phosphoribosyltransferase (190 aa).

Residue 114 to 122 participates in 5-phospho-alpha-D-ribose 1-diphosphate binding; that stretch reads EDVVTTGGS. Residues threonine 118 and arginine 146 each coordinate orotate.

The protein belongs to the purine/pyrimidine phosphoribosyltransferase family. PyrE subfamily. In terms of assembly, homodimer. It depends on Mg(2+) as a cofactor.

The catalysed reaction is orotidine 5'-phosphate + diphosphate = orotate + 5-phospho-alpha-D-ribose 1-diphosphate. It participates in pyrimidine metabolism; UMP biosynthesis via de novo pathway; UMP from orotate: step 1/2. In terms of biological role, catalyzes the transfer of a ribosyl phosphate group from 5-phosphoribose 1-diphosphate to orotate, leading to the formation of orotidine monophosphate (OMP). The sequence is that of Orotate phosphoribosyltransferase from Caldanaerobacter subterraneus subsp. tengcongensis (strain DSM 15242 / JCM 11007 / NBRC 100824 / MB4) (Thermoanaerobacter tengcongensis).